A 696-amino-acid chain; its full sequence is DNA-directed RNA polymerase subunit beta' (696 aa).

Residues Cys-76, Cys-78, Cys-94, and Cys-97 each coordinate Zn(2+). Residues Asp-496, Asp-498, and Asp-500 each coordinate Mg(2+).

This sequence belongs to the RNA polymerase beta' chain family. RpoC1 subfamily. As to quaternary structure, in plastids the minimal PEP RNA polymerase catalytic core is composed of four subunits: alpha, beta, beta', and beta''. When a (nuclear-encoded) sigma factor is associated with the core the holoenzyme is formed, which can initiate transcription. Requires Mg(2+) as cofactor. Zn(2+) is required as a cofactor.

Its subcellular location is the plastid. It is found in the chloroplast. The enzyme catalyses RNA(n) + a ribonucleoside 5'-triphosphate = RNA(n+1) + diphosphate. Its function is as follows. DNA-dependent RNA polymerase catalyzes the transcription of DNA into RNA using the four ribonucleoside triphosphates as substrates. This Guizotia abyssinica (Niger) protein is DNA-directed RNA polymerase subunit beta'.